Reading from the N-terminus, the 51-residue chain is Probable antitoxin PhoAT (51 aa).

This sequence belongs to the PhoAT antitoxin family. Interacts with toxin PhoH2.

Functionally, antitoxin component of a type II toxin-antitoxin (TA) system. The cognate antitoxin is PhoAT; the toxin gene cannot be expressed in the absence of the antitoxin gene in M.smegmatis (strain mc(2)4517), and abrogates the toxic effects of PhoH2 in M.smegmatis strain mc(2)155. The sequence is that of Probable antitoxin PhoAT from Mycobacterium tuberculosis (strain ATCC 25618 / H37Rv).